A 51-amino-acid polypeptide reads, in one-letter code: Light-harvesting protein B800/850/890 beta-2 chain (51 aa).

The Cytoplasmic portion of the chain corresponds to 1–17; the sequence is ADEMRNVSDEEAKEFHA. A bacteriochlorophyll is bound by residues H16 and H34. A helical transmembrane segment spans residues 18 to 40; sequence MFSQAFTVYVGVAVVAHILAWAW. At 41 to 51 the chain is on the periplasmic side; it reads RPWIPGDEGFG.

It belongs to the antenna complex beta subunit family. As to quaternary structure, the core complex is formed by different alpha and beta chains, binding bacteriochlorophyll molecules, and arranged most probably in tetrameric structures disposed around the reaction center. The non-pigmented gamma chains may constitute additional components.

Its subcellular location is the cell inner membrane. Its function is as follows. Antenna complexes are light-harvesting systems, which transfer the excitation energy to the reaction centers. The chain is Light-harvesting protein B800/850/890 beta-2 chain from Halorhodospira halophila (strain DSM 244 / SL1) (Ectothiorhodospira halophila (strain DSM 244 / SL1)).